A 414-amino-acid polypeptide reads, in one-letter code: Ankyrin repeat domain-containing protein 10 (414 aa).

ANK repeat units follow at residues Thr-18–Leu-47, Tyr-54–Ala-83, Phe-88–Lys-117, Val-121–Leu-150, and Ser-154–Ser-187. Positions Gly-310 to Met-332 are disordered.

The polypeptide is Ankyrin repeat domain-containing protein 10 (ANKRD10) (Gallus gallus (Chicken)).